The sequence spans 720 residues: MQNEIKKVCVIGSGVMGSGIAALIANSSHKVVLLDIIAKDSDDPNKIVKTAKENLHKQKPPPLSFPDKVNFITIGNLEHDLELIRDCDLVIEVIVEKLEIKHQLYNKIIPYLKEDAIIASNTSTLPLKRLKENLPDNIKSRFVITHFFNPPRYMELLELIIDSMVKFEVIERVSGFLTKTLGKTIVKCNDTPGFIANRVGCFLLELVARKAISQKLDFVALDKIFTICLGLPSTGIFGLYDLIGHDVMKLISSSLLAALPANDAYHKIYVNTPVLDKMIEKKLIGRKGEGGFYRLSVSNGKKIKEVININDLSYSSVQKVDISFNNLDELLVSDSVYGKIFTEIITEFYVYLASLVPSVTDNIYDIDAAMKLGYSWKYGPFELLTIAAKDGWNSVIKNADLMHIPLPQYLGNKEYQKIDKQKFNSHKDILQESQIVLENDSAKLINYRENFIFVITTKMNCLNHNVFYLLQEAASKAEKDGKNLYIYPQGNNFSAGADLKLLLSYIEDGNFHDLENLLKLGQQTMLHLKYSGVHIISCAKGVALGGGCELLLYSSYIVANQELNAGLVELGVGLIPGWGGVTEMFVRSKGDKTKLIRNVRNIIEQNKTSSADYFKSDYDVESMHVNMNKHYILDEALKLNLSKKIVPIPHKITLPKINLATEIDTSKYNDLQNKVLSKFQNIIDKHPDTNEEELLGYEREIFLELAKDPKTIEKLKAIVK.

The segment at 1–384 (MQNEIKKVCV…SWKYGPFELL (384 aa)) is 3-hydroxyacyl-CoA dehydrogenase. The tract at residues 453–720 (FVITTKMNCL…TIEKLKAIVK (268 aa)) is enoyl-CoA hydratase/isomerase.

The protein in the N-terminal section; belongs to the 3-hydroxyacyl-CoA dehydrogenase family. In the C-terminal section; belongs to the enoyl-CoA hydratase/isomerase family.

It catalyses the reaction a (3S)-3-hydroxyacyl-CoA + NAD(+) = a 3-oxoacyl-CoA + NADH + H(+). The enzyme catalyses a (3S)-3-hydroxyacyl-CoA = a (2E)-enoyl-CoA + H2O. It carries out the reaction a 4-saturated-(3S)-3-hydroxyacyl-CoA = a (3E)-enoyl-CoA + H2O. The catalysed reaction is a (3Z)-enoyl-CoA = a 4-saturated (2E)-enoyl-CoA. It catalyses the reaction a (3E)-enoyl-CoA = a 4-saturated (2E)-enoyl-CoA. The chain is Putative fatty acid oxidation complex trifunctional enzyme from Rickettsia felis (strain ATCC VR-1525 / URRWXCal2) (Rickettsia azadi).